A 212-amino-acid chain; its full sequence is MAYAYLFKYIIIGDTGVGKSCLLLQFTDKRFQPVHDLTMGVEFGARMITIDGKQIKLQIWDTAGQESFRSITRSYYRGAAGALLVYDITRRDTFNHLTTWLEDARQHSNSNMVIMLIGNKSDLESRREVKKEEGEAFAREHGLIFMETSAKTASNVEEAFINTAKEIYEKIQEGVFDINNEANGIKIGPQHAATNASHGGNQGGQQAGGGCC.

Alanine 2 is subject to N-acetylalanine. The segment at 2 to 19 (AYAYLFKYIIIGDTGVGK) is required for interaction with PRKCI. Residues glycine 16, valine 17, glycine 18, lysine 19, serine 20, cysteine 21, and threonine 38 each coordinate GTP. Residue serine 20 participates in Mg(2+) binding. The Switch 1 motif lies at 37–42 (LTMGVE). Threonine 38 and aspartate 61 together coordinate Mg(2+). The Switch 2 motif lies at 63 to 72 (AGQESFRSIT). Residues glycine 64, asparagine 119, lysine 120, aspartate 122, alanine 150, and lysine 151 each coordinate GTP. The interval 190–212 (QHAATNASHGGNQGGQQAGGGCC) is disordered. A compositionally biased stretch (gly residues) spans 200–212 (GNQGGQQAGGGCC). S-geranylgeranyl cysteine attachment occurs at residues cysteine 211 and cysteine 212.

It belongs to the small GTPase superfamily. Rab family. Interacts with PRKCI. Interacts with TRIP11. Interacts (in GTP-bound form) with GARIN1B. Interacts (GTP-bound) with HOPS complex component VPS39; interaction contributes to obtaining a functional HOPS complex that promotes autophagosome-lysosome membrane fusion driven by STX17-SNAP29-VAMP8. May interact with VPS41. Mg(2+) serves as cofactor. Post-translationally, prenylated. Prenylation is required for association with cellular membranes.

Its subcellular location is the endoplasmic reticulum-Golgi intermediate compartment membrane. The protein localises to the melanosome. It is found in the endoplasmic reticulum membrane. The protein resides in the golgi apparatus membrane. It localises to the cytoplasmic vesicle. Its subcellular location is the secretory vesicle. The protein localises to the acrosome. It is found in the autophagosome membrane. The catalysed reaction is GTP + H2O = GDP + phosphate + H(+). Its activity is regulated as follows. Regulated by guanine nucleotide exchange factors (GEFs) which promote the exchange of bound GDP for free GTP, GTPase activating proteins (GAPs) which increase the GTP hydrolysis activity, and GDP dissociation inhibitors (GDIs) which inhibit the dissociation of the nucleotide from the GTPase. Functionally, the small GTPases Rab are key regulators of intracellular membrane trafficking, from the formation of transport vesicles to their fusion with membranes. Rabs cycle between active GTP-bound and inactive GDP-bound states. In their active state, drive transport of vesicular carriers from donor organelles to acceptor organelles to regulate the membrane traffic that maintains organelle identity and morphology. RAB2A regulates autophagy by promoting autophagosome-lysosome fusion via recruitment of the HOPS endosomal tethering complex; this process involves autophagosomal RAB2A and lysosomal RAB39A recruitment of HOPS subcomplexes VPS39-VPS11 and VPS41-VPS16-VPS18-VPS33A, respectively, which assemble into a functional complex to mediate membrane tethering and SNAREs-driven membrane fusion. Required for protein transport from the endoplasmic reticulum to the Golgi complex. Regulates the compacted morphology of the Golgi. Together with RAB2B, redundantly required for efficient autophagic flux. This Rattus norvegicus (Rat) protein is Ras-related protein Rab-2A (Rab2a).